The chain runs to 701 residues: Polyribonucleotide nucleotidyltransferase (701 aa).

Mg(2+) contacts are provided by Asp-487 and Asp-493. Positions 554–613 (PTMIAMKIDTDKIRDVIGKGGATIRAICEETKASIDIEDDGSIKIFGESKEAAEAARQRV) constitute a KH domain. The S1 motif domain occupies 623 to 691 (GKIYLGKVER…NRGRIKLSIK (69 aa)).

The protein belongs to the polyribonucleotide nucleotidyltransferase family. As to quaternary structure, component of the RNA degradosome, which is a multiprotein complex involved in RNA processing and mRNA degradation. The cofactor is Mg(2+).

The protein localises to the cytoplasm. It catalyses the reaction RNA(n+1) + phosphate = RNA(n) + a ribonucleoside 5'-diphosphate. Its function is as follows. Involved in mRNA degradation. Catalyzes the phosphorolysis of single-stranded polyribonucleotides processively in the 3'- to 5'-direction. This Pseudomonas syringae pv. tomato (strain ATCC BAA-871 / DC3000) protein is Polyribonucleotide nucleotidyltransferase.